A 373-amino-acid polypeptide reads, in one-letter code: S-adenosylmethionine:tRNA ribosyltransferase-isomerase (373 aa).

Belongs to the QueA family. Monomer.

Its subcellular location is the cytoplasm. It carries out the reaction 7-aminomethyl-7-carbaguanosine(34) in tRNA + S-adenosyl-L-methionine = epoxyqueuosine(34) in tRNA + adenine + L-methionine + 2 H(+). The protein operates within tRNA modification; tRNA-queuosine biosynthesis. Its function is as follows. Transfers and isomerizes the ribose moiety from AdoMet to the 7-aminomethyl group of 7-deazaguanine (preQ1-tRNA) to give epoxyqueuosine (oQ-tRNA). The chain is S-adenosylmethionine:tRNA ribosyltransferase-isomerase from Prochlorococcus marinus (strain MIT 9515).